The chain runs to 329 residues: Beta-ketoacyl-[acyl-carrier-protein] synthase III (329 aa).

Catalysis depends on residues Cys113 and His255. Residues 256–260 (QANQR) form an ACP-binding region. Asn285 is a catalytic residue.

Belongs to the thiolase-like superfamily. FabH family. In terms of assembly, homodimer.

Its subcellular location is the cytoplasm. It catalyses the reaction malonyl-[ACP] + acetyl-CoA + H(+) = 3-oxobutanoyl-[ACP] + CO2 + CoA. The protein operates within lipid metabolism; fatty acid biosynthesis. Functionally, catalyzes the condensation reaction of fatty acid synthesis by the addition to an acyl acceptor of two carbons from malonyl-ACP. Catalyzes the first condensation reaction which initiates fatty acid synthesis and may therefore play a role in governing the total rate of fatty acid production. Possesses both acetoacetyl-ACP synthase and acetyl transacylase activities. Its substrate specificity determines the biosynthesis of branched-chain and/or straight-chain of fatty acids. The protein is Beta-ketoacyl-[acyl-carrier-protein] synthase III of Chlorobium chlorochromatii (strain CaD3).